A 109-amino-acid polypeptide reads, in one-letter code: MVSGSDSRSEPSQLSDRDLVESVLRDLSEAADKWEALVTQAETVTYSVDLGDVRAVANSDGRLLELTLHPGVMTGYAHGELADRVNLAITALRDEVEAENRARYGGRLQ.

This is an uncharacterized protein from Mycobacterium tuberculosis (strain CDC 1551 / Oshkosh).